The primary structure comprises 425 residues: Bifunctional phosphoribosylaminoimidazole carboxylase/phosphoribosylaminoimidazole succinocarboxamide synthetase (425 aa).

A2 carries the N-acetylalanine modification. Residues 2–260 (ATAEVLNIGR…WVADRVELLL (259 aa)) form an SAICAR synthetase domain region. Y22 carries the phosphotyrosine modification. S27 carries the phosphoserine modification. The residue at position 36 (K36) is an N6-acetyllysine. S107 carries the post-translational modification Phosphoserine. At T238 the chain carries Phosphothreonine. K247 is subject to N6-acetyllysine. Residues 261 to 266 (KSNSQC) are linker. The segment at 267 to 425 (RVVVLMGSTS…ADKKIRECNL (159 aa)) is AIR carboxylase domain. Residue S274 is modified to Phosphoserine. S332 lines the CO2 pocket.

This sequence in the N-terminal section; belongs to the SAICAR synthetase family. It in the C-terminal section; belongs to the AIR carboxylase family. Class II subfamily. Homooctamer.

It catalyses the reaction 5-amino-1-(5-phospho-D-ribosyl)imidazole-4-carboxylate + L-aspartate + ATP = (2S)-2-[5-amino-1-(5-phospho-beta-D-ribosyl)imidazole-4-carboxamido]succinate + ADP + phosphate + 2 H(+). The catalysed reaction is 5-amino-1-(5-phospho-D-ribosyl)imidazole-4-carboxylate + H(+) = 5-amino-1-(5-phospho-beta-D-ribosyl)imidazole + CO2. It functions in the pathway purine metabolism; IMP biosynthesis via de novo pathway; 5-amino-1-(5-phospho-D-ribosyl)imidazole-4-carboxamide from 5-amino-1-(5-phospho-D-ribosyl)imidazole-4-carboxylate: step 1/2. Its pathway is purine metabolism; IMP biosynthesis via de novo pathway; 5-amino-1-(5-phospho-D-ribosyl)imidazole-4-carboxylate from 5-amino-1-(5-phospho-D-ribosyl)imidazole (carboxylase route): step 1/1. In terms of biological role, bifunctional phosphoribosylaminoimidazole carboxylase and phosphoribosylaminoimidazole succinocarboxamide synthetase catalyzing two reactions of the de novo purine biosynthetic pathway. This Rattus norvegicus (Rat) protein is Bifunctional phosphoribosylaminoimidazole carboxylase/phosphoribosylaminoimidazole succinocarboxamide synthetase.